Consider the following 1018-residue polypeptide: Calcium-transporting ATPase sarcoplasmic/endoplasmic reticulum type (1018 aa).

Over 1-48 (MEDGHSKTVDEVLSHFRVDPERGLSLDQVKEYQKKYGPNELPAEEGKT) the chain is Cytoplasmic. The chain crosses the membrane as a helical span at residues 49–69 (LWQLVLEQFDDLLVKILLLAA). At 70-88 (IISFVLALFEEHEGVEAFV) the chain is on the lumenal side. The helical transmembrane segment at 89–109 (EPFVILLILIANAVVGVWQER) threads the bilayer. The Cytoplasmic segment spans residues 110–252 (NAESAIEALK…EIKTPLQQKL (143 aa)). Residues 253–272 (DEFGEQLSKVISLICVAVWA) traverse the membrane as a helical segment. Over 273 to 294 (INIGHFNDPAHGGSWIKGAVYY) the chain is Lumenal. The helical transmembrane segment at 295–312 (FKIAVALAVAAIPEGLPA) threads the bilayer. Val303, Ala304, Ile306, and Glu308 together coordinate Ca(2+). Residues 313-756 (VITTCLALGT…EEGRAIYNNM (444 aa)) lie on the Cytoplasmic side of the membrane. The active-site 4-aspartylphosphate intermediate is the Asp350. Residues Asp702 and Asp706 each coordinate Mg(2+). The helical transmembrane segment at 757 to 776 (KQFIRYLISSNIGEVVSIFL) threads the bilayer. Positions 767 and 770 each coordinate Ca(2+). The Lumenal portion of the chain corresponds to 777 to 786 (TAALGLPEAL). A helical transmembrane segment spans residues 787 to 807 (IPVQLLWVNLVTDGLPATALG). Residues Asn795, Thr798, and Asp799 each contribute to the Ca(2+) site. Residues 808–827 (FNPPDLDIMTKPPRKADEGL) lie on the Cytoplasmic side of the membrane. The helical transmembrane segment at 828–850 (ISGWLFFRYMAIGGYVGCATVGG) threads the bilayer. Residues 851–896 (AAWWFMFSETGPQLSYWQLTHHLSCLGGGEEFKGIDCKIFNDPHPM) are Lumenal-facing. The helical transmembrane segment at 897–916 (TMALSVLVTIEMLNAMNSLS) threads the bilayer. Glu907 contributes to the Ca(2+) binding site. Over 917-929 (ENQSLVQMPPWCN) the chain is Cytoplasmic. Residues 930-948 (IWLIASMCLSFALHFVILY) form a helical membrane-spanning segment. At 949-963 (VDVLSTVFQVTPLDG) the chain is on the lumenal side. The helical transmembrane segment at 964–984 (NEWMTVMKFSLPVVLLDEILK) threads the bilayer. The Cytoplasmic segment spans residues 985 to 1018 (FVARRISDGESYIKNMHGLVLAWAVFFAYIIWGP).

Belongs to the cation transport ATPase (P-type) (TC 3.A.3) family.

Its subcellular location is the endoplasmic reticulum membrane. It localises to the sarcoplasmic reticulum membrane. The catalysed reaction is Ca(2+)(in) + ATP + H2O = Ca(2+)(out) + ADP + phosphate + H(+). Its function is as follows. This magnesium-dependent enzyme catalyzes the hydrolysis of ATP coupled with the transport of calcium. In Anopheles gambiae (African malaria mosquito), this protein is Calcium-transporting ATPase sarcoplasmic/endoplasmic reticulum type.